The primary structure comprises 463 residues: uncharacterized protein (463 aa).

The PE domain occupies 1 to 93; it reads MSYMIAVPDM…AGAYASAEAT (93 aa). Disordered stretches follow at residues 231–320 and 408–463; these read GGAG…AGNG and NGGD…TPGQ. Residues 408 to 451 are compositionally biased toward gly residues; that stretch reads NGGDGGKGGDAQLIGNGGNGGNGGKGGTGLMPGINGTGGAGGSR.

The protein belongs to the mycobacterial PE family. PGRS subfamily.

This is an uncharacterized protein from Mycobacterium tuberculosis (strain ATCC 25618 / H37Rv).